A 192-amino-acid polypeptide reads, in one-letter code: MNKRNYMNTSVQEPPLDYSFRSIHVTQDLLSEEPRTGLRPVRHAKSGKSMTQSLWLNNNVLTDLRDFNHAVSQLLEHPENLAWIDLSFNDLTSIDPVLTTFFNLSVLYLHGNSIQRLGEVNKLAALPRLRSLTLHGNPIEEEKGYRQYVLCTLPHITTFDFSGVTKADRTTAEVWKRMNIKPKKVRIKHNAL.

LRR repeat units follow at residues 50–71 (MTQS…NHAV), 80–101 (NLAW…LTTF), and 103–124 (NLSV…NKLA). The 39-residue stretch at 137–175 (NPIEEEKGYRQYVLCTLPHITTFDFSGVTKADRTTAEVW) folds into the LRRCT domain.

Its subcellular location is the cytoplasm. In Bos taurus (Bovine), this protein is Leucine-rich repeat-containing protein 51.